The chain runs to 696 residues: Phosphate acetyltransferase (696 aa).

The segment at 367 to 696 (FEHKLLEQAR…QSPHEKATAQ (330 aa)) is phosphate acetyltransferase.

The protein in the N-terminal section; belongs to the CobB/CobQ family. This sequence in the C-terminal section; belongs to the phosphate acetyltransferase and butyryltransferase family.

It is found in the cytoplasm. The enzyme catalyses acetyl-CoA + phosphate = acetyl phosphate + CoA. It participates in metabolic intermediate biosynthesis; acetyl-CoA biosynthesis; acetyl-CoA from acetate: step 2/2. Its function is as follows. Involved in acetate metabolism. The protein is Phosphate acetyltransferase (pta) of Streptomyces avermitilis (strain ATCC 31267 / DSM 46492 / JCM 5070 / NBRC 14893 / NCIMB 12804 / NRRL 8165 / MA-4680).